A 407-amino-acid chain; its full sequence is Endo-1,4-beta-xylanase (407 aa).

The N-terminal stretch at 1 to 28 (MRNVVRKPLTIGLALTLLLPMGMTATSA) is a signal peptide. A GH10 domain is found at 42–406 (ALNAPQLDQR…KPAYWAIIDH (365 aa)). Glutamate 187 functions as the Proton donor in the catalytic mechanism. The active-site Nucleophile is the glutamate 293.

The protein belongs to the glycosyl hydrolase 10 (cellulase F) family.

Its subcellular location is the secreted. It catalyses the reaction Endohydrolysis of (1-&gt;4)-beta-D-xylosidic linkages in xylans.. It participates in glycan degradation; xylan degradation. The chain is Endo-1,4-beta-xylanase from Geobacillus stearothermophilus (Bacillus stearothermophilus).